Consider the following 388-residue polypeptide: P2X receptor E (388 aa).

Topologically, residues 1-28 (MNFRNIDWDSLFSYSTIKIVRIRDKRLG) are cytoplasmic. The helical transmembrane segment at 29 to 49 (ILHFAFLIGIILYIIVGTIFL) threads the bilayer. Residues 50-312 (QKKYLVLESP…QLGQFDFQTM (263 aa)) lie on the Lumenal side of the membrane. Residues 291-304 (RHGVRIIFIQTGQL) are pore-forming motif. Residues 313–333 (LLTFVSGIGLVTAASLIVDII) traverse the membrane as a helical segment. Residues 334 to 388 (ATRIMPQRSRYQELKFQDSSINNTQKTPTNDHTPLLKDNEDTINENSYQNNSYEK) lie on the Cytoplasmic side of the membrane. Residues 349 to 388 (FQDSSINNTQKTPTNDHTPLLKDNEDTINENSYQNNSYEK) form a disordered region. Composition is skewed to polar residues over residues 350-365 (QDSSINNTQKTPTNDH) and 377-388 (NENSYQNNSYEK).

It belongs to the P2X receptor family.

It is found in the contractile vacuole membrane. P2X receptors are ATP-gated ion channels that play a role in intracellular calcium signaling. Not required for the purinergic response to extracellular nucleotides. Not essential for osmoregulation. Inward currents evoked by intracellular ATP. ATP analog beta, gamma-imido-ATP is a weak partial agonist of p2xE. Exclusively selective for ATP over other nucleotides. Insensitive to copper and P2 receptor antagonists PPADS and suramin but strongly inhibited by sodium ions. More permeable to ammonium than either sodium or potassium ions and less permeable to choline. Permeable to calcium ions, but not chloride. The sequence is that of P2X receptor E (p2xE) from Dictyostelium discoideum (Social amoeba).